We begin with the raw amino-acid sequence, 247 residues long: Cytochrome c oxidase subunit 2 (247 aa).

Over 1–38 (MKEMMMSNMFNDVPTPWAMFFQDSATPNMEGMLELHNN) the chain is Mitochondrial intermembrane. A helical membrane pass occupies residues 39 to 58 (VVFYLCMMLGFVTFMLYNML). Over 59-78 (TTYNKSVMPYKYLNQGQFME) the chain is Mitochondrial matrix. The helical transmembrane segment at 79–103 (MMWTTLPAVMLLMIAFPSFILLYMC) threads the bilayer. The Mitochondrial intermembrane portion of the chain corresponds to 104-247 (DEVMAPAMTI…ADFLAWIDEQ (144 aa)). Cu cation contacts are provided by H182, C217, E219, C221, H225, and M228. E219 provides a ligand contact to Mg(2+).

This sequence belongs to the cytochrome c oxidase subunit 2 family. Component of the cytochrome c oxidase (complex IV, CIV), a multisubunit enzyme composed of a catalytic core of 3 subunits and several supernumerary subunits. The complex exists as a monomer or a dimer and forms supercomplexes (SCs) in the inner mitochondrial membrane with ubiquinol-cytochrome c oxidoreductase (cytochrome b-c1 complex, complex III, CIII). It depends on Cu cation as a cofactor.

The protein localises to the mitochondrion inner membrane. The catalysed reaction is 4 Fe(II)-[cytochrome c] + O2 + 8 H(+)(in) = 4 Fe(III)-[cytochrome c] + 2 H2O + 4 H(+)(out). Functionally, component of the cytochrome c oxidase, the last enzyme in the mitochondrial electron transport chain which drives oxidative phosphorylation. The respiratory chain contains 3 multisubunit complexes succinate dehydrogenase (complex II, CII), ubiquinol-cytochrome c oxidoreductase (cytochrome b-c1 complex, complex III, CIII) and cytochrome c oxidase (complex IV, CIV), that cooperate to transfer electrons derived from NADH and succinate to molecular oxygen, creating an electrochemical gradient over the inner membrane that drives transmembrane transport and the ATP synthase. Cytochrome c oxidase is the component of the respiratory chain that catalyzes the reduction of oxygen to water. Electrons originating from reduced cytochrome c in the intermembrane space (IMS) are transferred via the dinuclear copper A center (CU(A)) of subunit 2 and heme A of subunit 1 to the active site in subunit 1, a binuclear center (BNC) formed by heme A3 and copper B (CU(B)). The BNC reduces molecular oxygen to 2 water molecules using 4 electrons from cytochrome c in the IMS and 4 protons from the mitochondrial matrix. The sequence is that of Cytochrome c oxidase subunit 2 (COX2) from Brettanomyces custersianus (Yeast).